The chain runs to 234 residues: Protein spitz (234 aa).

Positions 1–28 are cleaved as a signal peptide; that stretch reads MHSTMSVQHGLVALVLIGCLAHPWHVEA. The Lumenal portion of the chain corresponds to 29-143; it reads CSSRTVPKPR…RPRPMLEKAS (115 aa). Residues 33–71 form a disordered region; that stretch reads TVPKPRSSISSSMSGTALPPTQAPVTSSTTMRTTTTTTP. The span at 56–71 shows a compositional bias: low complexity; that stretch reads PVTSSTTMRTTTTTTP. Asn-74 is a glycosylation site (N-linked (GlcNAc...) asparagine). Residues 78–122 enclose the EGF-like domain; sequence PTYKCPETFDAWYCLNDAHCFAVKIADLPVYSCECAIGFMGQRCE. 3 disulfide bridges follow: Cys-82–Cys-97, Cys-91–Cys-110, and Cys-112–Cys-121. A helical transmembrane segment spans residues 144–164; that stretch reads IASGAMCALVFMLFVCLAFYL. Residues 165 to 234 lie on the Cytoplasmic side of the membrane; the sequence is RFEQRAAKKA…SFAIRRSNKL (70 aa).

As to quaternary structure, interacts with Star via the lumenal domain. In terms of processing, proteolytic processing by Rhomboid occurs in the Golgi. Cleavage takes place within the transmembrane domain close to residue 144 and the active growth factor is released. N-glycosylated and O-glycosylated. As to expression, expressed throughout the embryo.

It localises to the cell membrane. The protein localises to the endoplasmic reticulum membrane. The protein resides in the golgi apparatus membrane. Functionally, ligand for the EGF receptor (Gurken). Involved in a number of unrelated developmental choices, for example, dorsal-ventral axis formation, glial migration, sensory organ determination, and muscle development. It is required for photoreceptor determination. In Drosophila melanogaster (Fruit fly), this protein is Protein spitz (spi).